The sequence spans 285 residues: Glycine--tRNA ligase alpha subunit (285 aa).

The protein belongs to the class-II aminoacyl-tRNA synthetase family. In terms of assembly, tetramer of two alpha and two beta subunits.

The protein resides in the cytoplasm. It carries out the reaction tRNA(Gly) + glycine + ATP = glycyl-tRNA(Gly) + AMP + diphosphate. In Thermodesulfovibrio yellowstonii (strain ATCC 51303 / DSM 11347 / YP87), this protein is Glycine--tRNA ligase alpha subunit.